Here is a 397-residue protein sequence, read N- to C-terminus: Lymphoid enhancer-binding factor 1 (397 aa).

A CTNNB1-binding region spans residues 1-60 (MPQLSGGGGGGDPELCATDEMIPFKDEGDPQKEKIFAEISHPEEEGDLADIKSSLVNESE). Lysine 25 is covalently cross-linked (Glycyl lysine isopeptide (Lys-Gly) (interchain with G-Cter in SUMO)). The disordered stretch occupies residues 38-102 (EISHPEEEGD…KHPDGGLYNK (65 aa)). The span at 80 to 96 (PYHDKAREHPDDGKHPD) shows a compositional bias: basic and acidic residues. Position 130 is a phosphoserine (serine 130). Threonine 153 carries the phosphothreonine; by NLK modification. Serine 164 carries the phosphoserine; by NLK modification. 2 disordered regions span residues 164–190 (SPGS…PAPE) and 266–296 (VKQE…KRPH). Lysine 267 participates in a covalent cross-link: Glycyl lysine isopeptide (Lys-Gly) (interchain with G-Cter in SUMO). A compositionally biased stretch (basic and acidic residues) spans 267 to 294 (KQEHPHTDSDLMHVKPEHEQRKEQEPKR). Positions 297-365 (IKKPLNAFML…LHMQLYPGWS (69 aa)) form a DNA-binding region, HMG box. Residues 367 to 397 (RDNYGKKKKRKREKLQESTSGTGPRMTAAYI) are disordered.

The protein belongs to the TCF/LEF family. As to quaternary structure, binds the armadillo repeat of CTNNB1 and forms a stable complex. Interacts with TLE1, PIASG, ALYREF/THOC4, EP300, MDFI and MDFIC. Interacts with DAZAP2. In terms of processing, phosphorylated at Thr-153 and/or Ser-164 by NLK. Phosphorylation by NLK at these sites represses LEF1-mediated transcriptional activation of target genes of the canonical Wnt signaling pathway.

Its subcellular location is the nucleus. In terms of biological role, transcription factor that binds DNA in a sequence-specific manner. Participates in the Wnt signaling pathway. Activates transcription of target genes in the presence of CTNNB1 and EP300. PIASG antagonizes both Wnt-dependent and Wnt-independent activation by LEF1. TLE1, TLE2, TLE3 and TLE4 repress transactivation mediated by LEF1 and CTNNB1. Regulates T-cell receptor alpha enhancer function. Required for IL17A expressing gamma-delta T-cell maturation and development, via binding to regulator loci of BLK to modulate expression. Acts as a positive regulator of odontoblast differentiation during mesenchymal tooth germ formation, expression is repressed during the bell stage by MSX1-mediated inhibition of CTNNB1 signaling. May play a role in hair cell differentiation and follicle morphogenesis. This Rattus norvegicus (Rat) protein is Lymphoid enhancer-binding factor 1.